A 563-amino-acid chain; its full sequence is Protein NRT1/ PTR FAMILY 5.9 (563 aa).

The helical transmembrane segment at 56–76 threads the bilayer; that stretch reads TWAGFTSMLPLFSAPLADTYW. Thr81 bears the Phosphothreonine mark. Helical transmembrane passes span 82-102, 110-130, 168-188, 194-214, 317-337, 362-382, 394-414, 441-461, 479-499, and 528-548; these read ILAS…TAFA, TISS…LGVL, FFQL…TVMA, FGWV…ILVF, FPIW…ATFF, TITL…IPIT, VMER…IAAI, IFWL…TVVG, FALY…LISI, and WLLA…CKFF.

This sequence belongs to the major facilitator superfamily. Proton-dependent oligopeptide transporter (POT/PTR) (TC 2.A.17) family. In terms of tissue distribution, expressed in roots and flowers.

It localises to the membrane. This is Protein NRT1/ PTR FAMILY 5.9 (NPF5.9) from Arabidopsis thaliana (Mouse-ear cress).